The chain runs to 294 residues: Elongation factor Ts (294 aa).

Residues 81–84 (TDFV) are involved in Mg(2+) ion dislocation from EF-Tu.

This sequence belongs to the EF-Ts family.

The protein resides in the cytoplasm. Associates with the EF-Tu.GDP complex and induces the exchange of GDP to GTP. It remains bound to the aminoacyl-tRNA.EF-Tu.GTP complex up to the GTP hydrolysis stage on the ribosome. The protein is Elongation factor Ts of Lawsonia intracellularis (strain PHE/MN1-00).